The following is a 78-amino-acid chain: Translational regulator CsrA (78 aa).

The protein belongs to the CsrA/RsmA family. As to quaternary structure, homodimer; the beta-strands of each monomer intercalate to form a hydrophobic core, while the alpha-helices form wings that extend away from the core.

It is found in the cytoplasm. A translational regulator that binds mRNA to regulate translation initiation and/or mRNA stability. Usually binds in the 5'-UTR at or near the Shine-Dalgarno sequence preventing ribosome-binding, thus repressing translation. Its main target seems to be the major flagellin gene, while its function is anatagonized by FliW. In Borrelia turicatae (strain 91E135), this protein is Translational regulator CsrA.